The following is a 427-amino-acid chain: Interleukin-13 receptor subunit alpha-1 (427 aa).

The N-terminal stretch at 1 to 21 is a signal peptide; it reads MEWPARLCGLWALLLCAGGGG. Topologically, residues 22-343 are extracellular; it reads GGGGAAPTET…MSIGKKRNST (322 aa). 3 consecutive Fibronectin type-III domains span residues 34-123, 128-226, and 227-339; these read PVTN…PPEG, AVTE…TSRV, and KPDP…IGKK. Residues Asn-37 and Asn-61 are each glycosylated (N-linked (GlcNAc...) asparagine). Cystine bridges form between Cys-62–Cys-102, Cys-95–Cys-117, and Cys-134–Cys-144. Asn-105, Asn-138, and Asn-157 each carry an N-linked (GlcNAc...) asparagine glycan. Cys-173 and Cys-185 form a disulfide bridge. N-linked (GlcNAc...) asparagine glycans are attached at residues Asn-235, Asn-265, Asn-293, Asn-329, and Asn-341. 2 disulfides stabilise this stretch: Cys-257–Cys-320 and Cys-282–Cys-296. A WSXWS motif motif is present at residues 327–331; the sequence is WSNWS. Residues 344–367 form a helical membrane-spanning segment; it reads LYITMLLIVPVIVAGAIIVLLLYL. Over 368–427 the chain is Cytoplasmic; the sequence is KRLKIIIFPPIPDPGKIFKEMFGDQNDDTLHWKKYDIYEKQTKEETDSVVLIENLKKASQ. The short motif at 374–382 is the Box 1 motif element; it reads IFPPIPDPG.

This sequence belongs to the type I cytokine receptor family. Type 5 subfamily. As to quaternary structure, interleukin-13 receptor is a complex of IL4R, IL13RA1, and possibly other components. Interacts with TRAF3IP1. Interacts with IL4. In terms of tissue distribution, ubiquitous. Highest levels in heart, liver, skeletal muscle and ovary; lowest levels in brain, lung and kidney. Also found in B-cells, T-cells and endothelial cells.

The protein resides in the membrane. Functionally, binds with low affinity to interleukin-13 (IL13). Together with IL4RA can form a functional receptor for IL13. Also serves as an alternate accessory protein to the common cytokine receptor gamma chain for interleukin-4 (IL4) signaling, but cannot replace the function of IL2RG in allowing enhanced interleukin-2 (IL2) binding activity. The protein is Interleukin-13 receptor subunit alpha-1 (IL13RA1) of Homo sapiens (Human).